The following is a 362-amino-acid chain: Methionine import ATP-binding protein MetN (362 aa).

The region spanning 2-241 (IHIKNLSKTY…PQHDVTRAMV (240 aa)) is the ABC transporter domain. 38–45 (GPSGAGKS) serves as a coordination point for ATP.

Belongs to the ABC transporter superfamily. Methionine importer (TC 3.A.1.24) family. As to quaternary structure, the complex is composed of two ATP-binding proteins (MetN), two transmembrane proteins (MetI) and a solute-binding protein (MetQ).

It is found in the cell inner membrane. It carries out the reaction L-methionine(out) + ATP + H2O = L-methionine(in) + ADP + phosphate + H(+). The catalysed reaction is D-methionine(out) + ATP + H2O = D-methionine(in) + ADP + phosphate + H(+). Part of the ABC transporter complex MetNIQ involved in methionine import. Responsible for energy coupling to the transport system. The polypeptide is Methionine import ATP-binding protein MetN (Bordetella avium (strain 197N)).